A 348-amino-acid polypeptide reads, in one-letter code: Phosphate acyltransferase (348 aa).

Belongs to the PlsX family. In terms of assembly, homodimer. Probably interacts with PlsY.

It is found in the cytoplasm. The enzyme catalyses a fatty acyl-[ACP] + phosphate = an acyl phosphate + holo-[ACP]. Its pathway is lipid metabolism; phospholipid metabolism. In terms of biological role, catalyzes the reversible formation of acyl-phosphate (acyl-PO(4)) from acyl-[acyl-carrier-protein] (acyl-ACP). This enzyme utilizes acyl-ACP as fatty acyl donor, but not acyl-CoA. The protein is Phosphate acyltransferase of Neisseria gonorrhoeae (strain ATCC 700825 / FA 1090).